The following is a 299-amino-acid chain: Bifunctional protein FolD (299 aa).

NADP(+)-binding positions include 168–170, Ser-193, and Ile-234; that span reads GRS.

The protein belongs to the tetrahydrofolate dehydrogenase/cyclohydrolase family. Homodimer.

The catalysed reaction is (6R)-5,10-methylene-5,6,7,8-tetrahydrofolate + NADP(+) = (6R)-5,10-methenyltetrahydrofolate + NADPH. It catalyses the reaction (6R)-5,10-methenyltetrahydrofolate + H2O = (6R)-10-formyltetrahydrofolate + H(+). The protein operates within one-carbon metabolism; tetrahydrofolate interconversion. In terms of biological role, catalyzes the oxidation of 5,10-methylenetetrahydrofolate to 5,10-methenyltetrahydrofolate and then the hydrolysis of 5,10-methenyltetrahydrofolate to 10-formyltetrahydrofolate. The sequence is that of Bifunctional protein FolD from Brucella anthropi (strain ATCC 49188 / DSM 6882 / CCUG 24695 / JCM 21032 / LMG 3331 / NBRC 15819 / NCTC 12168 / Alc 37) (Ochrobactrum anthropi).